We begin with the raw amino-acid sequence, 276 residues long: Large ribosomal subunit protein uL2 (276 aa).

The segment at 224 to 276 (VMNPVDHPHGGGEGKAPIGRKSPMTPWGKPTLGYKTRKKKNKSDKFIIRRRKK) is disordered. Residues 258–276 (KTRKKKNKSDKFIIRRRKK) show a composition bias toward basic residues.

This sequence belongs to the universal ribosomal protein uL2 family. As to quaternary structure, part of the 50S ribosomal subunit. Forms a bridge to the 30S subunit in the 70S ribosome.

Its function is as follows. One of the primary rRNA binding proteins. Required for association of the 30S and 50S subunits to form the 70S ribosome, for tRNA binding and peptide bond formation. It has been suggested to have peptidyltransferase activity; this is somewhat controversial. Makes several contacts with the 16S rRNA in the 70S ribosome. This chain is Large ribosomal subunit protein uL2, found in Geobacillus thermodenitrificans (strain NG80-2).